The primary structure comprises 121 residues: uncharacterized protein (121 aa).

Disordered regions lie at residues N38–Q76 and S91–N121. A compositionally biased stretch (basic residues) spans K43–K63. A compositionally biased stretch (low complexity) spans Q64–Q76.

This is an uncharacterized protein from Schizosaccharomyces pombe (strain 972 / ATCC 24843) (Fission yeast).